The sequence spans 360 residues: 3-isopropylmalate dehydrogenase (360 aa).

76–89 is a binding site for NAD(+); the sequence is GPKWDKIERDIRPE. Substrate is bound by residues R96, R106, R134, and D224. The Mg(2+) site is built by D224, D248, and D252. 282-294 lines the NAD(+) pocket; sequence GSAPDIAGLGIAN.

It belongs to the isocitrate and isopropylmalate dehydrogenases family. LeuB type 1 subfamily. Homodimer. It depends on Mg(2+) as a cofactor. Requires Mn(2+) as cofactor.

It is found in the cytoplasm. It carries out the reaction (2R,3S)-3-isopropylmalate + NAD(+) = 4-methyl-2-oxopentanoate + CO2 + NADH. Its pathway is amino-acid biosynthesis; L-leucine biosynthesis; L-leucine from 3-methyl-2-oxobutanoate: step 3/4. Catalyzes the oxidation of 3-carboxy-2-hydroxy-4-methylpentanoate (3-isopropylmalate) to 3-carboxy-4-methyl-2-oxopentanoate. The product decarboxylates to 4-methyl-2 oxopentanoate. The protein is 3-isopropylmalate dehydrogenase of Pseudomonas putida (strain ATCC 47054 / DSM 6125 / CFBP 8728 / NCIMB 11950 / KT2440).